The sequence spans 178 residues: MSNVFHATTIVCVRRGDKVAIAGDGQVTLGHTVMKSNARKVRRLGRDGQVLAGFAGAAADAFTLFELFEAKLEKHGQLSRAAVELAKDWRTERRLGKLEALLVVADKETSLVISGTGDVIEPEDGIVAIGSGGSYALSAARALMAHTALDARTIATEAIGIAGNICIYTNRNVVVDEL.

The active site involves threonine 8. Na(+) is bound by residues glycine 163, cysteine 166, and threonine 169.

It belongs to the peptidase T1B family. HslV subfamily. A double ring-shaped homohexamer of HslV is capped on each side by a ring-shaped HslU homohexamer. The assembly of the HslU/HslV complex is dependent on binding of ATP.

The protein resides in the cytoplasm. The enzyme catalyses ATP-dependent cleavage of peptide bonds with broad specificity.. Allosterically activated by HslU binding. In terms of biological role, protease subunit of a proteasome-like degradation complex believed to be a general protein degrading machinery. This chain is ATP-dependent protease subunit HslV, found in Xylella fastidiosa (strain 9a5c).